We begin with the raw amino-acid sequence, 252 residues long: N-glycosylase/DNA lyase (252 aa).

8-oxoguanine-binding residues include Gln32, Ser60, and Trp71. Residues 129-193 are helix-hairpin-helix; it reads KTYYSDMEKL…KDSRIEKYTL (65 aa). The Schiff-base intermediate with DNA role is filled by Lys153. Residues Phe157 and Pro183 each coordinate 8-oxoguanine. The active site involves Asp185. 8-oxoguanine is bound by residues Asp219 and Trp223.

It belongs to the archaeal N-glycosylase/DNA lyase (AGOG) family.

It catalyses the reaction 2'-deoxyribonucleotide-(2'-deoxyribose 5'-phosphate)-2'-deoxyribonucleotide-DNA = a 3'-end 2'-deoxyribonucleotide-(2,3-dehydro-2,3-deoxyribose 5'-phosphate)-DNA + a 5'-end 5'-phospho-2'-deoxyribonucleoside-DNA + H(+). Its function is as follows. DNA repair enzyme that is part of the base excision repair (BER) pathway; protects from oxidative damage by removing the major product of DNA oxidation, 8-oxoguanine (GO), from single- and double-stranded DNA substrates. This chain is N-glycosylase/DNA lyase, found in Methanococcus maripaludis (strain DSM 14266 / JCM 13030 / NBRC 101832 / S2 / LL).